Reading from the N-terminus, the 241-residue chain is MFLNSLPTNFAALEVGQHLYWQIGNIRLHGQVFLTSWILLGALLVFISVGTKKMENDPKGLQNLLEFLWDYIRDLSRTQIGEKVYRDWMPFIGTLFLFVFVSNWGGALIPWRLIKLPSGELGAPTADINTTIALALLVSLSYFYAGLSNKGWRYFEYYVHPTPIMLPFKILEDFTKPLSLSFRLFGNILADELVVGVLVFLVPLVLPIPVMFLGLFTSAIQALIFATLAAYYIGEAVEEHH.

Helical transmembrane passes span 30-50 (GQVFLTSWILLGALLVFISVG), 91-111 (FIGTLFLFVFVSNWGGALIPW), 128-148 (INTTIALALLVSLSYFYAGLS), 193-213 (LVVGVLVFLVPLVLPIPVMFL), and 214-234 (GLFTSAIQALIFATLAAYYIG).

It belongs to the ATPase A chain family. In terms of assembly, F-type ATPases have 2 components, CF(1) - the catalytic core - and CF(0) - the membrane proton channel. CF(1) has five subunits: alpha(3), beta(3), gamma(1), delta(1), epsilon(1). CF(0) has four main subunits: a, b, b' and c.

The protein resides in the cellular thylakoid membrane. Functionally, key component of the proton channel; it plays a direct role in the translocation of protons across the membrane. In Prochlorococcus marinus subsp. pastoris (strain CCMP1986 / NIES-2087 / MED4), this protein is ATP synthase subunit a.